Consider the following 697-residue polypeptide: Gametogenetin-binding protein 2 (697 aa).

Ser-360 is modified (phosphoserine).

Interacts with GGN. In terms of tissue distribution, expressed in heart, brain, placenta, lung, liver, skeletal muscle, kidney and pancreas. Expressed more abundantly in heart, pancreas and skeletal muscle.

It localises to the cytoplasmic vesicle. May be involved in spermatogenesis. The sequence is that of Gametogenetin-binding protein 2 (GGNBP2) from Homo sapiens (Human).